The chain runs to 473 residues: Trigger factor (473 aa).

Positions 162–243 (GDFVSIDLSA…VKSIKVRELP (82 aa)) constitute a PPIase FKBP-type domain. The interval 433–473 (TAEFFGPSGEQAEAEQDEAAPAEDATEETDADSDEAADDSK) is disordered. Residues 444–473 (AEAEQDEAAPAEDATEETDADSDEAADDSK) show a composition bias toward acidic residues.

It belongs to the FKBP-type PPIase family. Tig subfamily.

It is found in the cytoplasm. The enzyme catalyses [protein]-peptidylproline (omega=180) = [protein]-peptidylproline (omega=0). Its function is as follows. Involved in protein export. Acts as a chaperone by maintaining the newly synthesized protein in an open conformation. Functions as a peptidyl-prolyl cis-trans isomerase. This is Trigger factor from Mycolicibacterium vanbaalenii (strain DSM 7251 / JCM 13017 / BCRC 16820 / KCTC 9966 / NRRL B-24157 / PYR-1) (Mycobacterium vanbaalenii).